Consider the following 384-residue polypeptide: MVQVQRRTGGDKGAKGNRASSAPVRSRRMTQDDWSRTHPDDIFSVIEKTLVEDGYKWNGVKPGHCDWGKLKESGAIDNFRGTLEGELGKNCDLTCNAAAVKLDTLQKVKMSSDWTARVGIVLGAPGVGKSTSIKNLLDKFGAKHKMVLCLPFSQLLEGVFAGRLDTFLVDDLFCRSVGYGKYNTMLVDEVTRVHMCEILVLAGHLGVKNVICFGDPAQGLNYKAGSAVNYNFPIIAECYASRRFGKATADLINSSNGGGKPVVGNNEVKDSWTFEELCGKILDMSTVLVATRETQKFLLEDNIESILYSDAHGQTYDVVTIILEDEFDDAAICDPNVRAVLLTRARKGGMIKMGPNIAARFKNGDFNSRGVSKSCTGDTFCEDR.

Residues 1–36 are disordered; the sequence is MVQVQRRTGGDKGAKGNRASSAPVRSRRMTQDDWSR. The region spanning 88-238 is the (+)RNA virus helicase ATP-binding domain; the sequence is GKNCDLTCNA…NYNFPIIAEC (151 aa). 123-130 provides a ligand contact to ATP; sequence GAPGVGKS. The region spanning 239–384 is the (+)RNA virus helicase C-terminal domain; sequence YASRRFGKAT…CTGDTFCEDR (146 aa).

It belongs to the virgaviridae/benyvirus TGB1 movement protein family. Homooligomer. Interacts with movement protein TGB3.

The protein resides in the host cell junction. It is found in the host plasmodesma. Transports viral genome to neighboring plant cells directly through plasmodesmata, without any budding. The movement protein allows efficient cell to cell propagation, by bypassing the host cell wall barrier. Engages in homologous interactions leading to the formation of a ribonucleoprotein complex containing viral genomic and messenger RNAs (vRNPs). TGBp2 and TGBp3 are necessary for intracellular delivery of TGBp1-containing vRNPs to plasmodesmata. The chain is Movement protein TGB1 from Beet necrotic yellow vein virus (isolate Japan/S) (BNYVV).